The primary structure comprises 427 residues: Dihydrofolate synthetase (427 aa).

34–37 (GKGS) provides a ligand contact to ATP. Mg(2+)-binding residues include Glu-123 and His-153. ATP is bound by residues Arg-275 and Asp-296.

This sequence belongs to the folylpolyglutamate synthase family.

The protein resides in the cytoplasm. The enzyme catalyses 7,8-dihydropteroate + L-glutamate + ATP = 7,8-dihydrofolate + ADP + phosphate + H(+). It functions in the pathway cofactor biosynthesis; tetrahydrofolylpolyglutamate biosynthesis. Glutamate-adding enzyme which catalyzes the binding of the first glutamyl side chain to dihydropteroate. Leads to the de nove synthesis of tetrahydrofolate. The polypeptide is Dihydrofolate synthetase (FOL3) (Saccharomyces cerevisiae (strain ATCC 204508 / S288c) (Baker's yeast)).